The following is a 764-amino-acid chain: Thyrotropin receptor (764 aa).

The N-terminal stretch at 1–21 is a signal peptide; it reads MRPGSLLLLVLLLALSRSLRG. The Extracellular portion of the chain corresponds to 22–413; sequence KECASPPCEC…EFNPCEDIMG (392 aa). Cysteines 31 and 41 form a disulfide. N-linked (GlcNAc...) asparagine glycans are attached at residues N77 and N99. LRR repeat units lie at residues 100–124, 125–150, 151–174, 176–199, 200–223, 225–248, and 264–288; these read LSKMTHIEIRNTRSLTYIDPDALTE, LPLLKFLGIFNTGLRIFPDLTKIYST, DIFFILEITDNPYMTSVPENAFQG, CNETLTLKLYNNGFTSVQGHAFNG, TKLDAVYLNKNKYLTAIDNDAFGG, YSGPTLLDVSSTSVTALPSKGLEH, and PLSLSFLHLTRADLSYPSHCCAFKN. 2 N-linked (GlcNAc...) asparagine glycosylation sites follow: N177 and N198. An N-linked (GlcNAc...) asparagine glycan is attached at N302. The residue at position 385 (Y385) is a Sulfotyrosine. A helical transmembrane segment spans residues 414–441; that stretch reads YRFLRIVVWFVSLLALLGNIFVLLILLT. At 442–450 the chain is on the cytoplasmic side; it reads SHYKLTVPR. Residues 451 to 473 traverse the membrane as a helical segment; it reads FLMCNLAFADFCMGVYLLLIASV. Over 474–494 the chain is Extracellular; that stretch reads DLYTHSEYYNHAIDWQTGPGC. C494 and C569 are joined by a disulfide. The chain crosses the membrane as a helical span at residues 495–517; that stretch reads NTAGFFTVFASELSVYTLTVITL. Over 518 to 537 the chain is Cytoplasmic; sequence ERWYAITFAMRLDRKIRLRH. A helical membrane pass occupies residues 538–560; it reads AYTIMAGGWVSCFLLALLPMVGI. Topologically, residues 561–580 are extracellular; the sequence is SSYAKVSICLPMDTDTPLAL. The helical transmembrane segment at 581–602 threads the bilayer; that stretch reads AYIVLVLLLNVVAFVVVCSCYV. Residues 603–625 are Cytoplasmic-facing; that stretch reads KIYITVRNPQYNPRDKDTKIAKR. Residues 626–649 form a helical membrane-spanning segment; the sequence is MAVLIFTDFMCMAPISFYALSALM. Over 650-660 the chain is Extracellular; the sequence is NKPLITVTNSK. A helical transmembrane segment spans residues 661 to 682; sequence ILLVLFYPLNSCANPFLYAIFT. Over 683–764 the chain is Cytoplasmic; it reads KAFQRDVFIL…ISEEYKQTAL (82 aa). The PDZ-binding motif lies at 762-764; sequence TAL.

This sequence belongs to the G-protein coupled receptor 1 family. FSH/LSH/TSH subfamily. In terms of assembly, interacts with heterodimer GPHA2:GPHB5; this interaction stimulates cAMP production. Interacts (via the PDZ-binding motif) with SCRIB; regulates TSHR trafficking and function. Glycosylated. In terms of processing, sulfated. Sulfation on Tyr-385 plays a role in thyrotropin receptor binding and activation.

Its subcellular location is the cell membrane. It localises to the basolateral cell membrane. Its function is as follows. Receptor for the thyroid-stimulating hormone (TSH) or thyrotropin. Also acts as a receptor for the heterodimeric glycoprotein hormone (GPHA2:GPHB5) or thyrostimulin. The activity of this receptor is mediated by G proteins which activate adenylate cyclase. Plays a central role in controlling thyroid cell metabolism. The protein is Thyrotropin receptor (Tshr) of Mus musculus (Mouse).